The chain runs to 239 residues: Adenylate dimethylallyltransferase (239 aa).

Belongs to the isopentenyl transferase family.

It catalyses the reaction dimethylallyl diphosphate + AMP = N(6)-(dimethylallyl)adenosine 5'-phosphate + diphosphate. Its function is as follows. Transfers dimethylallyl groups to AMP as part of the biosynthesis of cytokinin phytohormones. The polypeptide is Adenylate dimethylallyltransferase (ipt) (Rhizobium radiobacter (Agrobacterium tumefaciens)).